The chain runs to 211 residues: tRNA (guanine-N(7)-)-methyltransferase (211 aa).

S-adenosyl-L-methionine contacts are provided by glutamate 37, aspartate 62, glutamate 89, and aspartate 112. Aspartate 112 is a catalytic residue. Residues lysine 116 and aspartate 148 each contribute to the substrate site.

This sequence belongs to the class I-like SAM-binding methyltransferase superfamily. TrmB family.

The catalysed reaction is guanosine(46) in tRNA + S-adenosyl-L-methionine = N(7)-methylguanosine(46) in tRNA + S-adenosyl-L-homocysteine. Its pathway is tRNA modification; N(7)-methylguanine-tRNA biosynthesis. In terms of biological role, catalyzes the formation of N(7)-methylguanine at position 46 (m7G46) in tRNA. In Geobacter metallireducens (strain ATCC 53774 / DSM 7210 / GS-15), this protein is tRNA (guanine-N(7)-)-methyltransferase.